The following is a 185-amino-acid chain: Elongation factor P (185 aa).

It belongs to the elongation factor P family.

It localises to the cytoplasm. It functions in the pathway protein biosynthesis; polypeptide chain elongation. Involved in peptide bond synthesis. Stimulates efficient translation and peptide-bond synthesis on native or reconstituted 70S ribosomes in vitro. Probably functions indirectly by altering the affinity of the ribosome for aminoacyl-tRNA, thus increasing their reactivity as acceptors for peptidyl transferase. This Limosilactobacillus fermentum (strain NBRC 3956 / LMG 18251) (Lactobacillus fermentum) protein is Elongation factor P.